A 392-amino-acid chain; its full sequence is Phosphoglycerate kinase (392 aa).

Substrate-binding positions include 21-23 (DFN), Arg36, 59-62 (HLGR), Arg113, and Arg146. ATP-binding positions include Lys197, Glu319, and 345–348 (GGDT).

It belongs to the phosphoglycerate kinase family. In terms of assembly, monomer.

It localises to the cytoplasm. The catalysed reaction is (2R)-3-phosphoglycerate + ATP = (2R)-3-phospho-glyceroyl phosphate + ADP. It participates in carbohydrate degradation; glycolysis; pyruvate from D-glyceraldehyde 3-phosphate: step 2/5. This Francisella philomiragia subsp. philomiragia (strain ATCC 25017 / CCUG 19701 / FSC 153 / O#319-036) protein is Phosphoglycerate kinase.